A 168-amino-acid chain; its full sequence is uncharacterized protein (168 aa).

This is an uncharacterized protein from Bacillus subtilis (strain 168).